The chain runs to 132 residues: Anti-sigma-E factor RseA (132 aa).

The residue at position 36 (T36) is a Phosphothreonine; by PknB. H63, C67, and C70 together coordinate Zn(2+). The interval 106 to 132 (RTPEVTPDVSEQAKFADDPTRGRRKRR) is disordered.

This sequence belongs to the zinc-associated anti-sigma factor (ZAS) superfamily. In terms of assembly, interacts with ECF RNA polymerase sigma factor SigE, interaction is abrogated by treatment of cells with H(2)O(2), detergent or vancomycin (the latter 2 cause surface stress). This probably inhibits the interaction of SigE with the RNA polymerase catalytic core. Requires Zn(2+) as cofactor. Post-translationally, phosphorylated by PknB on Thr-36; can be dephosphorylated (at least in vitro) by PstP. Phosphorylation is the signal for subsequent degradation by the ClpC1-ClpP2 complex. In terms of processing, degraded following vancomycin treatment (surface stress) by a ClpC1-ClpP2 complex.

The protein localises to the cytoplasm. Its function is as follows. An anti-sigma factor for extracytoplasmic function (ECF) sigma factor SigE. ECF sigma factors are held in an inactive form by an anti-sigma factor. The protein is Anti-sigma-E factor RseA (rseA) of Mycolicibacterium smegmatis (strain ATCC 700084 / mc(2)155) (Mycobacterium smegmatis).